The primary structure comprises 184 residues: ATP synthase subunit b 1 (184 aa).

A helical membrane pass occupies residues 36-55; sequence NILNLAILVGVLVFYGRKVV.

This sequence belongs to the ATPase B chain family. F-type ATPases have 2 components, F(1) - the catalytic core - and F(0) - the membrane proton channel. F(1) has five subunits: alpha(3), beta(3), gamma(1), delta(1), epsilon(1). F(0) has four main subunits: a(1), b(1), b'(1) and c(10-14). The alpha and beta chains form an alternating ring which encloses part of the gamma chain. F(1) is attached to F(0) by a central stalk formed by the gamma and epsilon chains, while a peripheral stalk is formed by the delta, b and b' chains.

Its subcellular location is the cellular thylakoid membrane. Functionally, f(1)F(0) ATP synthase produces ATP from ADP in the presence of a proton or sodium gradient. F-type ATPases consist of two structural domains, F(1) containing the extramembraneous catalytic core and F(0) containing the membrane proton channel, linked together by a central stalk and a peripheral stalk. During catalysis, ATP synthesis in the catalytic domain of F(1) is coupled via a rotary mechanism of the central stalk subunits to proton translocation. Its function is as follows. Component of the F(0) channel, it forms part of the peripheral stalk, linking F(1) to F(0). This chain is ATP synthase subunit b 1, found in Crocosphaera subtropica (strain ATCC 51142 / BH68) (Cyanothece sp. (strain ATCC 51142)).